A 69-amino-acid chain; its full sequence is Conotoxin reg3f (69 aa).

The N-terminal stretch at 1 to 20 (MMSKLGVLLTICLLLFPLSA) is a signal peptide. Positions 21 to 52 (LPLDGDQPADQPAERMQDISPEQNPLFHPDKR) are excised as a propeptide. Cystine bridges form between Cys-54-Cys-68, Cys-55-Cys-66, and Cys-60-Cys-69. At Cys-69 the chain carries Cysteine amide.

Expressed by the venom duct.

It localises to the secreted. This chain is Conotoxin reg3f, found in Conus regius (Crown cone).